Consider the following 498-residue polypeptide: Glycerol kinase (498 aa).

Position 12 (threonine 12) interacts with ADP. Residues threonine 12, threonine 13, and serine 14 each contribute to the ATP site. A sn-glycerol 3-phosphate-binding site is contributed by threonine 12. Arginine 16 contacts ADP. Sn-glycerol 3-phosphate-binding residues include arginine 82, glutamate 83, and tyrosine 134. Residues arginine 82, glutamate 83, and tyrosine 134 each contribute to the glycerol site. Histidine 230 is subject to Phosphohistidine; by HPr. Position 244 (aspartate 244) interacts with sn-glycerol 3-phosphate. 2 residues coordinate glycerol: aspartate 244 and glutamine 245. ADP contacts are provided by threonine 266, glycine 309, glutamine 313, glycine 410, and asparagine 414. ATP-binding residues include threonine 266, glycine 309, glutamine 313, and glycine 410.

Belongs to the FGGY kinase family. Homotetramer and homodimer (in equilibrium). In terms of processing, the phosphoenolpyruvate-dependent sugar phosphotransferase system (PTS), including enzyme I, and histidine-containing protein (HPr) are required for the phosphorylation, which leads to the activation of the enzyme.

It carries out the reaction glycerol + ATP = sn-glycerol 3-phosphate + ADP + H(+). Its pathway is polyol metabolism; glycerol degradation via glycerol kinase pathway; sn-glycerol 3-phosphate from glycerol: step 1/1. Its activity is regulated as follows. Activated by phosphorylation and inhibited by fructose 1,6-bisphosphate (FBP). In terms of biological role, key enzyme in the regulation of glycerol uptake and metabolism. Catalyzes the phosphorylation of glycerol to yield sn-glycerol 3-phosphate. The polypeptide is Glycerol kinase (Staphylococcus aureus (strain COL)).